A 259-amino-acid polypeptide reads, in one-letter code: 1,2-dihydroxy-1,2-dihydronaphthalene dehydrogenase (259 aa).

NAD(+)-binding positions include 8–35 and D58; that span reads AITG…SALV. Position 140 (S140) interacts with substrate. The Proton acceptor role is filled by Y153. K157 contributes to the NAD(+) binding site.

The protein belongs to the short-chain dehydrogenases/reductases (SDR) family.

The enzyme catalyses (1R,2S)-1,2-dihydronaphthalene-1,2-diol + NAD(+) = naphthalene-1,2-diol + NADH + H(+). It participates in aromatic compound metabolism; naphthalene degradation. In terms of biological role, catalyzes the oxidation of naphthalene dihydrodiol into 1,2-dihydroxynaphthalene. The polypeptide is 1,2-dihydroxy-1,2-dihydronaphthalene dehydrogenase (Ralstonia sp).